Here is a 2159-residue protein sequence, read N- to C-terminus: ATP-binding cassette sub-family A member 7 (2159 aa).

The chain crosses the membrane as a helical span at residues 22 to 42 (PIQLLVELLWPLFLFFILVAV). At 43–546 (RHSHPPLEHH…DVFLRVLSRS (504 aa)) the chain is on the extracellular side. A disulfide bridge connects residues Cys-75 and Cys-222. An N-linked (GlcNAc...) asparagine glycan is attached at Asn-309. 6 consecutive transmembrane segments (helical) span residues 547 to 567 (LPLF…KAVV), 590 to 610 (LGWF…LVLV), 623 to 643 (VVIF…SFLL), 652 to 672 (LAAA…VLCV), 678 to 698 (LHLG…GFGC), and 732 to 752 (AFLL…EAVC). The ABC transporter 1 domain maps to 804-1035 (VSIRGLKKHF…LGCGYYLTLV (232 aa)). 838 to 845 (GHNGAGKT) lines the ATP pocket. Residues 846-866 (TTLSILSGLFPPSSGSASILG) form a helical membrane-spanning segment. 2 disordered regions span residues 1042 to 1088 (VTHD…GAVP) and 1172 to 1192 (GGDS…PTGP). The segment covering 1044–1061 (HDAKGDSEDPRREKKSDG) has biased composition (basic and acidic residues). The segment covering 1062–1081 (NGRTSDTAFTRGTSDKSNQA) has biased composition (polar residues). A helical membrane pass occupies residues 1246–1266 (VVLPALFVGLALFFSLIVPPF). Residues 1267-1551 (GQYPPLQLSP…TLIASSVDVL (285 aa)) lie on the Extracellular side of the membrane. Residues Cys-1359 and Cys-1373 are joined by a disulfide bond. The next 5 helical transmembrane spans lie at 1552–1572 (VSIC…LVLI), 1598–1618 (FLWD…IFLA), 1635–1655 (LLLL…SFFF), 1663–1683 (VVLT…TFVL), and 1743–1763 (IIGK…LITL). Positions 1807–2039 (LVLRDLTKVY…FGAGHTLTLR (233 aa)) constitute an ABC transporter 2 domain. 1841 to 1848 (GVNGAGKT) is an ATP binding site. A disordered region spans residues 2118–2159 (QGEEEESSRQEAEEEEVSKPGRQHPKRVSRFLEDPSSVETMI). Residues 2119-2133 (GEEEESSRQEAEEEE) show a composition bias toward acidic residues.

The protein belongs to the ABC transporter superfamily. ABCA family. Post-translationally, N-glycosylated. Widely expressed with higher expression in brain, lung, adrenal gland, spleen and hematopoietic tissues (at protein level). In the brain, expressed in cortex, cerebellum, hippocampus, olfactory bulb, neurons, astrocytes and microglia (at protein level). Also expressed in adipocytes and macrophages (at protein level). Expressed in thymocytes (at protein level). Highly expressed in spleen and hematopoietic tissues. Expressed in brain, lung, macrophages, microglia, oligodendrocytes and neurons.

The protein resides in the cell membrane. The protein localises to the golgi apparatus membrane. Its subcellular location is the early endosome membrane. It is found in the cytoplasm. It localises to the cell projection. The protein resides in the ruffle membrane. The protein localises to the phagocytic cup. Functionally, probable ATP-binding cassette (ABC) transporter that plays a role in lipid homeostasis and macrophage-mediated phagocytosis. Binds APOA1 and may function in apolipoprotein-mediated phospholipid efflux from cells. May also mediate cholesterol efflux. May regulate cellular ceramide homeostasis during keratinocyte differentiation. Involved in lipid raft organization and CD1D localization on thymocytes and antigen-presenting cells, which plays an important role in natural killer T-cell development and activation. Plays a role in phagocytosis of apoptotic cells by macrophages. Macrophage phagocytosis is stimulated by APOA1 or APOA2, probably by stabilization of ABCA7. Also involved in phagocytic clearance of amyloid-beta by microglia cells and macrophages. Further limits amyloid-beta production by playing a role in the regulation of amyloid-beta A4 precursor protein (APP) endocytosis and/or processing. The polypeptide is ATP-binding cassette sub-family A member 7 (Abca7) (Mus musculus (Mouse)).